Consider the following 178-residue polypeptide: Interleukin-1 receptor antagonist protein (178 aa).

Residues 1–26 (MEICRGPYSHLISLLLILLFRSESAG) form the signal peptide. A disulfide bridge links C92 with C142. N110 is a glycosylation site (N-linked (GlcNAc...) asparagine).

Belongs to the IL-1 family.

The protein resides in the secreted. In terms of biological role, anti-inflammatory antagonist of interleukin-1 family of proinflammatory cytokines such as interleukin-1beta/IL1B and interleukin-1alpha/IL1A. Protects from immune dysregulation and uncontrolled systemic inflammation triggered by IL1 for a range of innate stimulatory agents such as pathogens. This is Interleukin-1 receptor antagonist protein (Il1rn) from Rattus norvegicus (Rat).